The sequence spans 184 residues: Putative NAD(P)H nitroreductase HI_1542 (184 aa).

FMN is bound by residues 10-12 (RKS), Arg-35, and His-39. An NAD(+)-binding site is contributed by 122-127 (AAQAQG). 132–134 (WIS) contributes to the FMN binding site.

This sequence belongs to the nitroreductase family. As to quaternary structure, homodimer. FMN serves as cofactor.

This chain is Putative NAD(P)H nitroreductase HI_1542, found in Haemophilus influenzae (strain ATCC 51907 / DSM 11121 / KW20 / Rd).